A 334-amino-acid polypeptide reads, in one-letter code: MLKTTIIGASGYTGAELALMVEKHPELTLAGLYVSANSSDAGKCISQLHGKLAGVIEMPVLPLTDPLGVAQDSDVIFLATAHEVSHDLAPLFLQQGCQVFDLSGAFRVKGDDFYTQFYGFAHQHSEWLDKAAYGLAEWNEEAIKASQLVAVAGCYTTAAQLAIKPLLVSQLVDTNQWPVINATSGVSGAGRKASMTNSFCEVSLQPYGIFNHRHQPEIVHHLGCDVIFTPHLGNFKRGILATITMKLQDGVTKEQVAHAFAQAYDRKPAVRLKGDVIPRIQDVEFTPFCDLGWKVQGQHIIVISAIDNLLKGASSQAMQCLNIHYGFSPLTALL.

The active site involves Cys154.

The protein belongs to the NAGSA dehydrogenase family. Type 1 subfamily.

Its subcellular location is the cytoplasm. It carries out the reaction N-acetyl-L-glutamate 5-semialdehyde + phosphate + NADP(+) = N-acetyl-L-glutamyl 5-phosphate + NADPH + H(+). It functions in the pathway amino-acid biosynthesis; L-arginine biosynthesis; N(2)-acetyl-L-ornithine from L-glutamate: step 3/4. In terms of biological role, catalyzes the NADPH-dependent reduction of N-acetyl-5-glutamyl phosphate to yield N-acetyl-L-glutamate 5-semialdehyde. This is N-acetyl-gamma-glutamyl-phosphate reductase from Vibrio vulnificus (strain YJ016).